The following is a 698-amino-acid chain: Elongation factor G (698 aa).

Residues 8–284 (ANVRNIGIMA…AVVDYLPSPL (277 aa)) form the tr-type G domain. GTP is bound by residues 17 to 24 (AHIDAGKT), 81 to 85 (DTPGH), and 135 to 138 (NKLD).

Belongs to the TRAFAC class translation factor GTPase superfamily. Classic translation factor GTPase family. EF-G/EF-2 subfamily.

The protein resides in the cytoplasm. Functionally, catalyzes the GTP-dependent ribosomal translocation step during translation elongation. During this step, the ribosome changes from the pre-translocational (PRE) to the post-translocational (POST) state as the newly formed A-site-bound peptidyl-tRNA and P-site-bound deacylated tRNA move to the P and E sites, respectively. Catalyzes the coordinated movement of the two tRNA molecules, the mRNA and conformational changes in the ribosome. This Salinispora tropica (strain ATCC BAA-916 / DSM 44818 / JCM 13857 / NBRC 105044 / CNB-440) protein is Elongation factor G.